The following is a 499-amino-acid chain: Neuropeptide CCHamide-1 receptor (499 aa).

The Extracellular segment spans residues M1 to P85. Residues N33 and N61 are each glycosylated (N-linked (GlcNAc...) asparagine). The chain crosses the membrane as a helical span at residues I86–F106. Over L107 to N117 the chain is Cytoplasmic. The helical transmembrane segment at T118 to A138 threads the bilayer. Topologically, residues S139–D162 are extracellular. A disulfide bond links C154 and C240. A helical membrane pass occupies residues V163–I183. Residues V184–T203 are Cytoplasmic-facing. Residues L204–G224 traverse the membrane as a helical segment. The Extracellular portion of the chain corresponds to S225–H259. Residues F260–L280 traverse the membrane as a helical segment. The Cytoplasmic segment spans residues H281–V309. The helical transmembrane segment at L310–F330 threads the bilayer. At Y331 to R348 the chain is on the extracellular side. The helical transmembrane segment at I349–V369 threads the bilayer. Over S370–N499 the chain is Cytoplasmic.

The protein belongs to the G-protein coupled receptor 1 family. Low levels in larval brain and gut with higher levels in adult brain and gut. In the brain expression is widely distributed, including strong expression in the mushroom bodies. Expressed weakly in s-LNv (small ventral lateral neurons) and strongly in l-LNv (large ventral lateral neurons), but not in other clock neurons.

The protein localises to the cell membrane. Receptor for the neuropeptide CCHamide-1. Plays a role in the modulation of starvation-induced olfactory behavior where starved flies show increased responsiveness to food odorants, repellants and pheromones. Contributes to regulation of sleep latency (the time required to fall asleep), amount of sleep and depth of sleep (arousability). Involved in modulation of PDP1 and PDF levels in s-LNv (small ventral lateral neurons) clock neurons in response to CCHa1 released by DN1a (anterior dorsal neurons 1) clock neurons, to regulate morning activity. In a subset of dopaminergic cells in the protocerebral anterior medial (PAM) cluster involved in suppressing arousability in response to CCHa1 secreted by gut enteroendocrine cells. In Drosophila melanogaster (Fruit fly), this protein is Neuropeptide CCHamide-1 receptor.